The sequence spans 310 residues: MALRRPPRLRLCARLPDFFLLLLFRGCLIGAVNLKSSNRTPVVQEFESVELSCIITDSQTSDPRIEWKKIQDEQTTYVFFDNKIQGDLAGRAEILGKTSLKIWNVTRRDSALYRCEVVARNDRKEIDEIVIELTVQVKPVTPVCRVPKAVPVGKMATLHCQESEGHPRPHYSWYRNDVPLPTDSRANPRFRNSSFHLNSETGTLVFTAVHKDDSGQYYCIASNDAGSARCEEQEMEVYDLNIGGIIGGVLVVLAVLALITLGICCAYRRGYFINNKQDGESYKNPGKPDGVNYIRTDEEGDFRHKSSFVI.

The signal sequence occupies residues 1–31 (MALRRPPRLRLCARLPDFFLLLLFRGCLIGA). Residues 32–241 (VNLKSSNRTP…EQEMEVYDLN (210 aa)) are Extracellular-facing. An Ig-like V-type domain is found at 35–127 (KSSNRTPVVQ…VARNDRKEID (93 aa)). Intrachain disulfides connect cysteine 53-cysteine 115 and cysteine 160-cysteine 219. Asparagine 104 and asparagine 192 each carry an N-linked (GlcNAc...) asparagine glycan. In terms of domain architecture, Ig-like C2-type spans 139–236 (PVTPVCRVPK…SARCEEQEME (98 aa)). A helical membrane pass occupies residues 242–262 (IGGIIGGVLVVLAVLALITLG). Residues 263–310 (ICCAYRRGYFINNKQDGESYKNPGKPDGVNYIRTDEEGDFRHKSSFVI) lie on the Cytoplasmic side of the membrane. 2 S-palmitoyl cysteine lipidation sites follow: cysteine 264 and cysteine 265.

Belongs to the immunoglobulin superfamily. As to quaternary structure, interacts with ITGAM. Interacts with GORASP2. Proteolytically cleaved from endothelial cells surface into a soluble form by ADAM10 and ADAM17; the release of soluble JAM3 is increased by pro-inflammatory factors. In terms of processing, S-palmitoylated by ZDHHC7. S-palmitoylation promotes expression at tight junctions. Detected on round and elongated spermatids (at protein level). Highest expression in placenta, brain and kidney. Significant expression is detected on platelets. Expressed in intestinal mucosa cells. Expressed in the vascular endothelium. Found in serum (at protein level). Also detected in the synovial fluid of patients with rheumatoid arthritis, psoriatic arthritis or ostearthritis (at protein level).

It is found in the cell membrane. The protein resides in the cell junction. It localises to the desmosome. Its subcellular location is the tight junction. The protein localises to the secreted. Junctional adhesion protein that mediates heterotypic cell-cell interactions with its cognate receptor JAM2 to regulate different cellular processes. Plays a role in homing and mobilization of hematopoietic stem and progenitor cells within the bone marrow. At the surface of bone marrow stromal cells, it contributes to the retention of the hematopoietic stem and progenitor cells expressing JAM3. Plays a central role in leukocytes extravasation by facilitating transmigration through the endothelium. Plays a role in spermatogenesis where JAM2 and JAM3, which are respectively expressed by Sertoli and germ cells, mediate an interaction between both cell types and play an essential role in the anchorage of germ cells onto Sertoli cells and the assembly of cell polarity complexes during spermatid differentiation. Also functions as a counter-receptor for ITGAM, mediating leukocyte-platelet interactions and is involved in the regulation of transepithelial migration of polymorphonuclear neutrophils (PMN). Plays a role in angiogenesis. Plays a role in the regulation of cell migration. During myogenesis, it is involved in myocyte fusion. Functionally, promotes chemotaxis of vascular endothelial cells and stimulates angiogenesis. The chain is Junctional adhesion molecule C (JAM3) from Homo sapiens (Human).